Here is a 472-residue protein sequence, read N- to C-terminus: NADH-quinone oxidoreductase subunit N (472 aa).

The next 14 helical transmembrane spans lie at 11-31, 43-63, 67-87, 103-123, 125-145, 159-179, 200-220, 234-254, 265-285, 293-313, 318-338, 362-384, 401-421, and 446-466; these read AELS…FLPA, ILLT…LFGG, STPM…LVFL, GEFY…VSAG, FLLF…LVAF, FILS…MIYG, VLAL…VPFH, VSAY…MIIL, WSEI…LFAI, FMAF…LAGT, ASLV…FGVI, PKLT…FAGF, LIVF…LLIV, and LLVC…YQLL.

This sequence belongs to the complex I subunit 2 family. In terms of assembly, NDH-1 is composed of 14 different subunits. Subunits NuoA, H, J, K, L, M, N constitute the membrane sector of the complex.

It localises to the cell inner membrane. It carries out the reaction a quinone + NADH + 5 H(+)(in) = a quinol + NAD(+) + 4 H(+)(out). Its function is as follows. NDH-1 shuttles electrons from NADH, via FMN and iron-sulfur (Fe-S) centers, to quinones in the respiratory chain. The immediate electron acceptor for the enzyme in this species is believed to be a menaquinone. Couples the redox reaction to proton translocation (for every two electrons transferred, four hydrogen ions are translocated across the cytoplasmic membrane), and thus conserves the redox energy in a proton gradient. The protein is NADH-quinone oxidoreductase subunit N of Phocaeicola vulgatus (strain ATCC 8482 / DSM 1447 / JCM 5826 / CCUG 4940 / NBRC 14291 / NCTC 11154) (Bacteroides vulgatus).